Reading from the N-terminus, the 368-residue chain is MPDIVNRKVEHVEIAAFENVDGLSSSTFLNDVILVHQGFPGISFSEINTKTKFFRKEISVPIMVTGMTGGRNELGRINKIIAEVTEKFGIPMGVGSQRVAIEKAEARESFAIVRKVAPTIPIIANLGMPQLVKGYGLKEFQDAIQMIEADAIAVHLNPAQEVFQPEGEPEYQIYALEKLRDISKELSVPIIVKESGNGISMETAKLLYSYGIKNFDTSGQGGTNWIAIEMIRDIRRGNWKAESAKNFLDWGVPTAASIMEVRYSVPDSFLVGSGGIRSGLDAAKAIALGADIAGMALPVLKSAIEGKESLEQFFRKIIFELKAAMMLTGSKDVNALKKTSIVILGKLKEWAEYRGINLSTYDKVRKRE.

7–8 lines the substrate pocket; sequence RK. FMN-binding positions include T65, 66-68, S96, and N125; that span reads GMT. 96–98 is a binding site for substrate; that stretch reads SQR. Residue Q160 participates in substrate binding. E161 serves as a coordination point for Mg(2+). FMN-binding positions include K193, S218, T223, 275–277, and 296–297; these read GIR and AL.

Belongs to the IPP isomerase type 2 family. In terms of assembly, homooctamer. Dimer of tetramers. Requires FMN as cofactor. NADPH serves as cofactor. The cofactor is Mg(2+).

Its subcellular location is the cytoplasm. The enzyme catalyses isopentenyl diphosphate = dimethylallyl diphosphate. In terms of biological role, involved in the biosynthesis of isoprenoids. Catalyzes the 1,3-allylic rearrangement of the homoallylic substrate isopentenyl (IPP) to its allylic isomer, dimethylallyl diphosphate (DMAPP). This chain is Isopentenyl-diphosphate delta-isomerase, found in Saccharolobus islandicus (strain L.S.2.15 / Lassen #1) (Sulfolobus islandicus).